A 266-amino-acid polypeptide reads, in one-letter code: MRLIPLKTAAQVGKWAAAHIAKRINDFQPTAERPFVLGLPTGGTPLATYKALIELYQEGKVSFKHVVTFNMDEYVGISADHPESYRSFMYNNFFNHIDIQEENINLLNGNAEDHEAECQRYEDKIKSYGRINLFMGGVGNDGHIAFNEPASSLSSRTRIKTLTEDTRIANSRFFDGDINQVPKYALTIGVGTLLDSQEIMILVTGHNKALALEAAVEGSVNHLWTVSALQLHPKSVIVCDEPSTQELKVKTVKYFTELEAKNIVGF.

Residue Asp72 is the Proton acceptor; for enolization step of the active site. The For ring-opening step role is filled by Asp141. The Proton acceptor; for ring-opening step role is filled by His143. The active-site For ring-opening step is the Glu148.

Belongs to the glucosamine/galactosamine-6-phosphate isomerase family. NagB subfamily. In terms of assembly, homohexamer.

The enzyme catalyses alpha-D-glucosamine 6-phosphate + H2O = beta-D-fructose 6-phosphate + NH4(+). It participates in amino-sugar metabolism; N-acetylneuraminate degradation; D-fructose 6-phosphate from N-acetylneuraminate: step 5/5. Its activity is regulated as follows. Allosterically activated by N-acetylglucosamine 6-phosphate (GlcNAc6P). In terms of biological role, catalyzes the reversible isomerization-deamination of glucosamine 6-phosphate (GlcN6P) to form fructose 6-phosphate (Fru6P) and ammonium ion. In Vibrio vulnificus (strain CMCP6), this protein is Glucosamine-6-phosphate deaminase.